Here is a 92-residue protein sequence, read N- to C-terminus: Transcription factor PRE4 (92 aa).

Residues K5–L60 enclose the bHLH domain.

The protein belongs to the bHLH protein family. Interacts with HFR1 and IBH1. As to expression, expressed in roots, leaves, stems and flowers.

It is found in the nucleus. In terms of biological role, atypical and probable non DNA-binding bHLH transcription factor that integrates multiple signaling pathways to regulate cell elongation and plant development. Regulates light responses by binding and inhibiting the activity of the bHLH transcription factor HFR1, a critical regulator of light signaling and shade avoidance. May have a regulatory role in various aspects of gibberellin-dependent growth and development. This is Transcription factor PRE4 (PRE4) from Arabidopsis thaliana (Mouse-ear cress).